The chain runs to 347 residues: MNPMIFTSLLATIMLGTSIVLTSSHWFLTWLGFEMNMMAIIPVLMKKYNPRSMEAATKYFLTQATASMILVLAIIINLMYSGQWTIMIMENPTASMLITIALVMKLGLAPFHFWVPEVTQGVSLSSGLILLTWQKIAPLSLLYQIFPSINTNLLLIMSLLSIMIGGWGGLNQTQLRKIMAYSSIAHMGWMIAIMIYNPNLSLLNLLIYIMMTSSMFMLLIINSTTSTSSLSRAWNINPIVVSTMMVILLSLGGLPPLTGFMPKWMIIQELTKNSSVMLPSLMAILALLNLFFYMRLTYSTALTMFPTMNNMKLTWQFQSTNIMPMMMSLISMSMLALPLAPSLITLN.

The next 11 helical transmembrane spans lie at 1 to 21, 25 to 45, 68 to 88, 96 to 116, 122 to 142, 145 to 165, 178 to 198, 201 to 221, 239 to 259, 274 to 294, and 326 to 346; these read MNPM…SIVL, HWFL…PVLM, MILV…TIMI, MLIT…FWVP, VSLS…LSLL, IFPS…IMIG, IMAY…IYNP, SLLN…LLII, IVVS…PLTG, SSVM…FFYM, and MMSL…LITL.

Belongs to the complex I subunit 2 family. In terms of assembly, core subunit of respiratory chain NADH dehydrogenase (Complex I) which is composed of 45 different subunits. Interacts with TMEM242.

Its subcellular location is the mitochondrion inner membrane. It catalyses the reaction a ubiquinone + NADH + 5 H(+)(in) = a ubiquinol + NAD(+) + 4 H(+)(out). Functionally, core subunit of the mitochondrial membrane respiratory chain NADH dehydrogenase (Complex I) which catalyzes electron transfer from NADH through the respiratory chain, using ubiquinone as an electron acceptor. Essential for the catalytic activity and assembly of complex I. The protein is NADH-ubiquinone oxidoreductase chain 2 of Sylvisorex lunaris (Moon forest shrew).